We begin with the raw amino-acid sequence, 426 residues long: Tyrosine--tRNA ligase (426 aa).

Position 38 (Y38) interacts with L-tyrosine. The 'HIGH' region signature appears at 43–52 (PTADSLHIGS). L-tyrosine is bound by residues Y176 and Q180. The 'KMSKS' region signature appears at 236 to 240 (KFGKT). Position 239 (K239) interacts with ATP. Positions 359-426 (QTIVEVLTQS…KKLFNLYIWK (68 aa)) constitute an S4 RNA-binding domain.

The protein belongs to the class-I aminoacyl-tRNA synthetase family. TyrS type 1 subfamily. In terms of assembly, homodimer.

It localises to the cytoplasm. The enzyme catalyses tRNA(Tyr) + L-tyrosine + ATP = L-tyrosyl-tRNA(Tyr) + AMP + diphosphate + H(+). In terms of biological role, catalyzes the attachment of tyrosine to tRNA(Tyr) in a two-step reaction: tyrosine is first activated by ATP to form Tyr-AMP and then transferred to the acceptor end of tRNA(Tyr). The sequence is that of Tyrosine--tRNA ligase from Aliivibrio fischeri (strain ATCC 700601 / ES114) (Vibrio fischeri).